The following is a 482-amino-acid chain: U2 small nuclear ribonucleoprotein auxiliary factor 35 kDa subunit-related protein 2 (482 aa).

Positions 1 to 59 are disordered; it reads MAAPEKMTFPEKPSHKKYRAALKKEKRKKRRQELARLRDSGLSQKEEEEDTFIEEQQLE. Over residues 14–31 the composition is skewed to basic residues; it reads SHKKYRAALKKEKRKKRR. Residue lysine 45 forms a Glycyl lysine isopeptide (Lys-Gly) (interchain with G-Cter in SUMO2) linkage. Positions 46–58 are enriched in acidic residues; the sequence is EEEEDTFIEEQQL. Lysine 62 is covalently cross-linked (Glycyl lysine isopeptide (Lys-Gly) (interchain with G-Cter in SUMO2)). The disordered stretch occupies residues 115-135; it reads QRKEREEEEQKRQEKKEKEEA. A C3H1-type 1 zinc finger spans residues 166 to 194; the sequence is EKDRANCPFYSKTGACRFGDRCSRKHNFP. The region spanning 198–304 is the RRM domain; that stretch reads PTLLIKSMFT…RQLQCEFCPV (107 aa). The C3H1-type 2 zinc-finger motif lies at 306-333; that stretch reads RWKMAICGLFEIQQCPRGKHCNFLHVFR. At serine 349 the chain carries Phosphoserine. Residues 351–482 form a disordered region; the sequence is DRTGSSFGKN…DRTVQSPKSK (132 aa). 2 stretches are compositionally biased toward basic and acidic residues: residues 360–375 and 383–398; these read NSERRERMGHHDDYYS and PSPDHSYKRNGESERK. The residue at position 384 (serine 384) is a Phosphoserine. Residues 399-412 are compositionally biased toward basic residues; it reads SSRHRGKKSHKRTS. Residues 413 to 435 are compositionally biased toward basic and acidic residues; it reads KSRERHNSRSRGRNRDRSRDRSR. A compositionally biased stretch (basic residues) spans 436–454; the sequence is GRGSRSRSRSRSRRSRRSR.

Component of the U11/U12 snRNPs that are part of the U12-type spliceosome. Interacts (via RS domain) with SRSF1 and SRSF2. Interacts with U2AF2/U2AF65. Post-translationally, phosphorylated in the RS domain by SRPK1. In terms of tissue distribution, widely expressed.

The protein localises to the nucleus. In terms of biological role, pre-mRNA-binding protein required for splicing of both U2- and U12-type introns. Selectively interacts with the 3'-splice site of U2- and U12-type pre-mRNAs and promotes different steps in U2 and U12 intron splicing. Recruited to U12 pre-mRNAs in an ATP-dependent manner and is required for assembly of the pre-spliceosome, a precursor to other spliceosomal complexes. For U2-type introns, it is selectively and specifically required for the second step of splicing. The sequence is that of U2 small nuclear ribonucleoprotein auxiliary factor 35 kDa subunit-related protein 2 (ZRSR2) from Homo sapiens (Human).